A 620-amino-acid polypeptide reads, in one-letter code: Chaperone protein HscA homolog (620 aa).

Belongs to the heat shock protein 70 family.

Functionally, chaperone involved in the maturation of iron-sulfur cluster-containing proteins. Has a low intrinsic ATPase activity which is markedly stimulated by HscB. This is Chaperone protein HscA homolog from Acinetobacter baylyi (strain ATCC 33305 / BD413 / ADP1).